The following is a 49-amino-acid chain: Metallothionein (49 aa).

The tract at residues 1-16 (SCAGSCKCKNCRCRSC) is beta. A divalent metal cation contacts are provided by Cys2, Cys6, Cys8, Cys11, Cys13, Cys16, Cys20, Cys21, Cys23, Cys24, Cys28, Cys31, Cys35, Cys37, Cys45, Cys47, and Cys48. The segment at 17-49 (RKSCCSCCPAGCNNCAKGCVCKEPASSKCSCCH) is alpha.

The protein belongs to the metallothionein superfamily. Type 1 family.

Metallothioneins have a high content of cysteine residues that bind various heavy metals. The sequence is that of Metallothionein from Phasianus colchicus colchicus (Black-necked pheasant).